The chain runs to 171 residues: Calcium-binding allergen Ole e 8 (171 aa).

EF-hand domains lie at 16–51 (QEPN…LGSN), 52–87 (TSKE…ETDP), 92–127 (GGEN…LGER), and 128–163 (YAEH…KSGN). Ca(2+) is bound by residues aspartate 29, asparagine 31, aspartate 33, lysine 35, glutamate 40, aspartate 65, aspartate 67, aspartate 69, glutamate 76, aspartate 105, aspartate 107, asparagine 109, glutamate 116, aspartate 141, aspartate 143, aspartate 145, tyrosine 147, and glutamate 152.

In terms of assembly, homodimer. Expressed in pollen.

The polypeptide is Calcium-binding allergen Ole e 8 (Olea europaea (Common olive)).